The following is a 214-amino-acid chain: MSLSTPLITDSTIQAATWLKNGQLLAYPTESVWGIGCDPFNKQAVMRLLDIKQRPIEKGMIVVTDSPSRITALLEGLTAVERQTVLDSWQADSINATAKQAHTWLLPIPKNLPITIPSWITGAHDSVAVRVIDHPLVKQLCAQMVSVSNPYGFVVSTSCNPSGKPPALSLIEAQSYFLGDNVNSDECVGYLKGETLGYQLPSQIGDALTGQVIR.

In terms of domain architecture, YrdC-like spans 9–214; it reads TDSTIQAATW…GDALTGQVIR (206 aa).

This sequence belongs to the SUA5 family. TsaC subfamily.

The protein resides in the cytoplasm. It carries out the reaction L-threonine + hydrogencarbonate + ATP = L-threonylcarbamoyladenylate + diphosphate + H2O. Its function is as follows. Required for the formation of a threonylcarbamoyl group on adenosine at position 37 (t(6)A37) in tRNAs that read codons beginning with adenine. Catalyzes the conversion of L-threonine, HCO(3)(-)/CO(2) and ATP to give threonylcarbamoyl-AMP (TC-AMP) as the acyladenylate intermediate, with the release of diphosphate. In Psychrobacter cryohalolentis (strain ATCC BAA-1226 / DSM 17306 / VKM B-2378 / K5), this protein is Threonylcarbamoyl-AMP synthase.